A 165-amino-acid polypeptide reads, in one-letter code: Small ribosomal subunit protein bS16 (165 aa).

It belongs to the bacterial ribosomal protein bS16 family.

This chain is Small ribosomal subunit protein bS16, found in Azobacteroides pseudotrichonymphae genomovar. CFP2.